Consider the following 30-residue polypeptide: Trypsin inhibitor 2 (30 aa).

3 cysteine pairs are disulfide-bonded: Cys2–Cys19, Cys9–Cys21, and Cys15–Cys27.

This sequence belongs to the protease inhibitor I7 (squash-type serine protease inhibitor) family.

The protein resides in the secreted. Inhibits trypsin. The sequence is that of Trypsin inhibitor 2 from Ecballium elaterium (Squirting cucumber).